We begin with the raw amino-acid sequence, 1046 residues long: Hemoglobin-haptoglobin-binding protein A (1046 aa).

The signal sequence occupies residues 1-24; that stretch reads MTNFRLNLLAYSVMLGLTAGVAYA. Repeat copies occupy residues 26-29, 30-33, 34-37, and 38-41. The 4 X 4 AA tandem repeats of Q-P-T-N stretch occupies residues 26–41; the sequence is QPTNQPTNQPTNQPTN. A TonB box motif is present at residues 51–58; sequence EQINVLGS. The TBDR plug domain maps to 61–188; that stretch reads HNDNTPPKIA…LGGSVSFDTK (128 aa). In terms of domain architecture, TBDR beta-barrel spans 196-1046; the sequence is NKNYYASYKR…NYRMSVQFEF (851 aa). Positions 1029–1046 match the TonB C-terminal box motif; the sequence is NRFYAPGRNYRMSVQFEF.

The protein belongs to the TonB-dependent receptor family. Hemoglobin/haptoglobin binding protein subfamily.

Its subcellular location is the cell outer membrane. Functionally, acts as a receptor for the hemoglobin/haptoglobin complex of the human host and is required for heme uptake. Does not bind hemoglobin alone. In Haemophilus influenzae, this protein is Hemoglobin-haptoglobin-binding protein A (hhuA).